Consider the following 148-residue polypeptide: Transcriptional regulator MraZ (148 aa).

2 consecutive SpoVT-AbrB domains span residues 5–51 (ATSL…PLPA) and 80–123 (AEDV…SMEA).

This sequence belongs to the MraZ family. In terms of assembly, forms oligomers.

It localises to the cytoplasm. The protein localises to the nucleoid. The sequence is that of Transcriptional regulator MraZ from Methylobacillus flagellatus (strain ATCC 51484 / DSM 6875 / VKM B-1610 / KT).